Consider the following 338-residue polypeptide: Ketol-acid reductoisomerase (NADP(+)) (338 aa).

A KARI N-terminal Rossmann domain is found at 1–181 (MNVYYDKDCD…GGGRSGIIET (181 aa)). NADP(+) contacts are provided by residues 24–27 (YGSQ), Arg47, Ser50, Ser52, and 82–85 (DEFQ). His107 is a catalytic residue. Gly133 contributes to the NADP(+) binding site. The 146-residue stretch at 182–327 (TFKDETETDL…AKLRSMMPWI (146 aa)) folds into the KARI C-terminal knotted domain. Mg(2+)-binding residues include Asp190, Glu194, Glu226, and Glu230. Residue Ser251 participates in substrate binding.

This sequence belongs to the ketol-acid reductoisomerase family. Requires Mg(2+) as cofactor.

The enzyme catalyses (2R)-2,3-dihydroxy-3-methylbutanoate + NADP(+) = (2S)-2-acetolactate + NADPH + H(+). It carries out the reaction (2R,3R)-2,3-dihydroxy-3-methylpentanoate + NADP(+) = (S)-2-ethyl-2-hydroxy-3-oxobutanoate + NADPH + H(+). It participates in amino-acid biosynthesis; L-isoleucine biosynthesis; L-isoleucine from 2-oxobutanoate: step 2/4. It functions in the pathway amino-acid biosynthesis; L-valine biosynthesis; L-valine from pyruvate: step 2/4. Involved in the biosynthesis of branched-chain amino acids (BCAA). Catalyzes an alkyl-migration followed by a ketol-acid reduction of (S)-2-acetolactate (S2AL) to yield (R)-2,3-dihydroxy-isovalerate. In the isomerase reaction, S2AL is rearranged via a Mg-dependent methyl migration to produce 3-hydroxy-3-methyl-2-ketobutyrate (HMKB). In the reductase reaction, this 2-ketoacid undergoes a metal-dependent reduction by NADPH to yield (R)-2,3-dihydroxy-isovalerate. The chain is Ketol-acid reductoisomerase (NADP(+)) from Psychrobacter sp. (strain PRwf-1).